The chain runs to 570 residues: Protein misato homolog 1 (570 aa).

Ser495 bears the Phosphoserine mark.

The protein belongs to the misato family.

It localises to the mitochondrion outer membrane. The protein localises to the cytoplasm. Functionally, involved in the regulation of mitochondrial distribution and morphology. Required for mitochondrial fusion and mitochondrial network formation. This is Protein misato homolog 1 (MSTO1) from Pongo pygmaeus (Bornean orangutan).